The sequence spans 277 residues: Caspase-3 (277 aa).

At M1 the chain carries N-acetylmethionine. Propeptides lie at residues 1–9 (MENTENSVD) and 10–28 (SKSI…QSMD). Residues 1–10 (MENTENSVDS) show a composition bias toward polar residues. The tract at residues 1-20 (MENTENSVDSKSIKNLEPKI) is disordered. An N6-acetyllysine modification is found at K11. Residues 11–20 (KSIKNLEPKI) show a composition bias toward basic and acidic residues. Position 26 is a phosphoserine (S26). Residues H121 and C163 contribute to the active site. At C163 the chain carries S-nitrosocysteine; in inhibited form.

This sequence belongs to the peptidase C14A family. In terms of assembly, heterotetramer that consists of two anti-parallel arranged heterodimers, each one formed by a 17 kDa (p17) and a 12 kDa (p12) subunit. Interacts with BIRC6/bruce. Cleavage by granzyme B, caspase-6, caspase-8 and caspase-10 generates the two active subunits. Additional processing of the propeptides is likely due to the autocatalytic activity of the activated protease. Active heterodimers between the small subunit of caspase-7 protease and the large subunit of caspase-3 also occur and vice versa. In terms of processing, S-nitrosylated on its catalytic site cysteine in unstimulated cell lines and denitrosylated upon activation of the Fas apoptotic pathway, associated with an increase in intracellular caspase activity. Fas therefore activates caspase-3 not only by inducing the cleavage of the caspase zymogen to its active subunits, but also by stimulating the denitrosylation of its active site thiol. Post-translationally, ubiquitinated by BIRC6; this activity is inhibited by DIABLO/SMAC.

It is found in the cytoplasm. It carries out the reaction Strict requirement for an Asp residue at positions P1 and P4. It has a preferred cleavage sequence of Asp-Xaa-Xaa-Asp-|- with a hydrophobic amino-acid residue at P2 and a hydrophilic amino-acid residue at P3, although Val or Ala are also accepted at this position.. With respect to regulation, inhibited by BIRC6; following inhibition of BIRC6-caspase binding by DIABLO/SMAC, BIRC6 is subjected to caspase cleavage, leading to an increase in active caspases. Its function is as follows. Involved in the activation cascade of caspases responsible for apoptosis execution. At the onset of apoptosis, it proteolytically cleaves poly(ADP-ribose) polymerase PARP1 at a '216-Asp-|-Gly-217' bond. Cleaves and activates sterol regulatory element binding proteins (SREBPs) between the basic helix-loop-helix leucine zipper domain and the membrane attachment domain. Cleaves and activates caspase-6, -7 and -9 (CASP6, CASP7 and CASP9, respectively). Cleaves and inactivates interleukin-18 (IL18). Triggers cell adhesion in sympathetic neurons through RET cleavage. Cleaves IL-1 beta between an Asp and an Ala, releasing the mature cytokine which is involved in a variety of inflammatory processes. Cleaves and inhibits serine/threonine-protein kinase AKT1 in response to oxidative stress. Acts as an inhibitor of type I interferon production during virus-induced apoptosis by mediating cleavage of antiviral proteins CGAS, IRF3 and MAVS, thereby preventing cytokine overproduction. Also involved in pyroptosis by mediating cleavage and activation of gasdermin-E (GSDME). Cleaves XRCC4 and phospholipid scramblase proteins XKR4, XKR8 and XKR9, leading to promote phosphatidylserine exposure on apoptotic cell surface. Cleaves BIRC6 following inhibition of BIRC6-caspase binding by DIABLO/SMAC. This chain is Caspase-3 (CASP3), found in Pan troglodytes (Chimpanzee).